The chain runs to 559 residues: DNA ligase (559 aa).

Glutamate 247 provides a ligand contact to ATP. Lysine 249 (N6-AMP-lysine intermediate) is an active-site residue. Residues arginine 254, arginine 269, glutamate 299, phenylalanine 339, arginine 414, and lysine 420 each coordinate ATP.

This sequence belongs to the ATP-dependent DNA ligase family. Mg(2+) serves as cofactor.

The catalysed reaction is ATP + (deoxyribonucleotide)n-3'-hydroxyl + 5'-phospho-(deoxyribonucleotide)m = (deoxyribonucleotide)n+m + AMP + diphosphate.. DNA ligase that seals nicks in double-stranded DNA during DNA replication, DNA recombination and DNA repair. The polypeptide is DNA ligase (Pyrococcus abyssi).